Here is a 191-residue protein sequence, read N- to C-terminus: Large ribosomal subunit protein bL9 (191 aa).

This sequence belongs to the bacterial ribosomal protein bL9 family.

Binds to the 23S rRNA. This chain is Large ribosomal subunit protein bL9, found in Granulibacter bethesdensis (strain ATCC BAA-1260 / CGDNIH1).